The sequence spans 259 residues: Insulin-induced gene 1 protein (259 aa).

Over 1-66 (MPRLHDHVWS…ARPGSWHHDL (66 aa)) the chain is Cytoplasmic. Residues 33-57 (PQGPGAPEPEPAPRGQREGTAGFSA) form a disordered region. Residues 67-89 (VQRSLVLFSFGVVLALVLNLLQI) form a helical membrane-spanning segment. Residues 90-108 (QRNVTLFPDEVIATIFSSA) lie on the Extracellular side of the membrane. A helical transmembrane segment spans residues 109-126 (WWVPPCCGTAAAVVGLLY). Topologically, residues 127–141 (PCIDSHLGEPHKFKR) are cytoplasmic. Glycyl lysine isopeptide (Lys-Gly) (interchain with G-Cter in ubiquitin) cross-links involve residues lysine 138 and lysine 140. A helical transmembrane segment spans residues 142–164 (EWASVMRCIAVFVGINHASAKLD). Over 165-167 (FAN) the chain is Extracellular. Residues 168–186 (NVQLSLTLAALSLGLWWTF) form a helical membrane-spanning segment. At 187–191 (DRSRS) the chain is on the cytoplasmic side. Serine 189 carries the post-translational modification Phosphoserine. A helical membrane pass occupies residues 192–213 (GLGLGITIAFLATLITQFLVYN). Topologically, residues 214–227 (GVYQYTSPDFLYIR) are extracellular. The chain crosses the membrane as a helical span at residues 228–245 (SWLPCIFFSGGVTVGNIG). At 246-259 (RQLAMGVPEKPHSD) the chain is on the cytoplasmic side. The KxHxx motif lies at 253-259 (PEKPHSD).

The protein belongs to the INSIG family. In terms of assembly, interacts with SCAP; interaction is direct and only takes place in the presence of sterols; it prevents interaction between SCAP and the coat protein complex II (COPII). Associates with the SCAP-SREBP complex (composed of SCAP and SREBF1/SREBP1 or SREBF2/SREBP2); association is mediated via its interaction with SCAP and only takes place in the presence of sterols. Interaction with SCAP is mutually exclusive with PAQR3. Interacts with HMGCR (via its SSD); the interaction, accelerated by sterols, leads to the recruitment of HMGCR to AMFR/gp78 for its ubiquitination by the sterol-mediated ERAD pathway. Interacts with AMFR/gp78 (via its membrane domain); the interaction recruits HMCR at the ER membrane for its ubiquitination and degradation by the sterol-mediated ERAD pathway. Interacts with SOAT2/ACAT2; leading to promote recruitment of AMFR/gp78 and subsequent ubiquitination of SOAT2/ACAT2. Interacts with RNF139. Interacts with RNF145. In terms of processing, phosphorylation at Ser-189 by PCK1 reduces binding to oxysterol, disrupting the interaction between INSIG1 and SCAP, thereby promoting nuclear translocation of SREBP proteins (SREBF1/SREBP1 or SREBF2/SREBP2) and subsequent transcription of downstream lipogenesis-related genes. Post-translationally, ubiquitinated by AMFR/gp78 in response to sterol deprivation, leading to its degradation: when the SCAP-SREBP complex becomes dissociated from INSIG1, INSIG1 is then ubiquitinated and degraded in proteasomes. Although ubiquitination is required for rapid INSIG1 degradation, it is not required for release of the SCAP-SREBP complex. Ubiquitinated by RNF139. As to expression, highly expressed in liver and kidney.

The protein localises to the endoplasmic reticulum membrane. Functionally, oxysterol-binding protein that mediates feedback control of cholesterol synthesis by controlling both endoplasmic reticulum to Golgi transport of SCAP and degradation of HMGCR. Acts as a negative regulator of cholesterol biosynthesis by mediating the retention of the SCAP-SREBP complex in the endoplasmic reticulum, thereby blocking the processing of sterol regulatory element-binding proteins (SREBPs) SREBF1/SREBP1 and SREBF2/SREBP2. Binds oxysterol, including 25-hydroxycholesterol, regulating interaction with SCAP and retention of the SCAP-SREBP complex in the endoplasmic reticulum. In presence of oxysterol, interacts with SCAP, retaining the SCAP-SREBP complex in the endoplasmic reticulum, thereby preventing SCAP from escorting SREBF1/SREBP1 and SREBF2/SREBP2 to the Golgi. Sterol deprivation or phosphorylation by PCK1 reduce oxysterol-binding, disrupting the interaction between INSIG1 and SCAP, thereby promoting Golgi transport of the SCAP-SREBP complex, followed by processing and nuclear translocation of SREBF1/SREBP1 and SREBF2/SREBP2. Also regulates cholesterol synthesis by regulating degradation of HMGCR: initiates the sterol-mediated ubiquitin-mediated endoplasmic reticulum-associated degradation (ERAD) of HMGCR via recruitment of the reductase to the ubiquitin ligases AMFR/gp78 and/or RNF139. Also regulates degradation of SOAT2/ACAT2 when the lipid levels are low: initiates the ubiquitin-mediated degradation of SOAT2/ACAT2 via recruitment of the ubiquitin ligases AMFR/gp78. This chain is Insulin-induced gene 1 protein, found in Rattus norvegicus (Rat).